The following is a 236-amino-acid chain: Eukaryotic translation initiation factor 3 subunit J (236 aa).

The interval 1 to 88 (MADDWESAAD…EAEAQRVASL (88 aa)) is disordered. The segment covering 28 to 46 (GEDEDEDIKDSWEDEEEKK) has biased composition (acidic residues). Basic and acidic residues-rich tracts occupy residues 47 to 58 (DEEKPTKTEAPA) and 68 to 77 (AKLEQQARLE).

The protein belongs to the eIF-3 subunit J family. As to quaternary structure, component of the eukaryotic translation initiation factor 3 (eIF-3) complex. The eIF-3 complex interacts with pix.

It is found in the cytoplasm. In terms of biological role, component of the eukaryotic translation initiation factor 3 (eIF-3) complex, which is involved in protein synthesis of a specialized repertoire of mRNAs and, together with other initiation factors, stimulates binding of mRNA and methionyl-tRNAi to the 40S ribosome. The eIF-3 complex specifically targets and initiates translation of a subset of mRNAs involved in cell proliferation. The sequence is that of Eukaryotic translation initiation factor 3 subunit J from Drosophila erecta (Fruit fly).